The chain runs to 274 residues: Diaminopimelate epimerase (274 aa).

Substrate-binding residues include Asn-11, Gln-44, and Asn-64. Cys-73 acts as the Proton donor in catalysis. Substrate contacts are provided by residues Gly-74–Asn-75, Asn-157, Asn-190, and Glu-208–Arg-209. Cys-217 serves as the catalytic Proton acceptor. Gly-218–Ser-219 contacts substrate.

This sequence belongs to the diaminopimelate epimerase family. In terms of assembly, homodimer.

The protein resides in the cytoplasm. The catalysed reaction is (2S,6S)-2,6-diaminopimelate = meso-2,6-diaminopimelate. It participates in amino-acid biosynthesis; L-lysine biosynthesis via DAP pathway; DL-2,6-diaminopimelate from LL-2,6-diaminopimelate: step 1/1. In terms of biological role, catalyzes the stereoinversion of LL-2,6-diaminopimelate (L,L-DAP) to meso-diaminopimelate (meso-DAP), a precursor of L-lysine and an essential component of the bacterial peptidoglycan. The polypeptide is Diaminopimelate epimerase (Shigella flexneri serotype 5b (strain 8401)).